The chain runs to 298 residues: ATP phosphoribosyltransferase (298 aa).

It belongs to the ATP phosphoribosyltransferase family. Long subfamily. The cofactor is Mg(2+).

Its subcellular location is the cytoplasm. The enzyme catalyses 1-(5-phospho-beta-D-ribosyl)-ATP + diphosphate = 5-phospho-alpha-D-ribose 1-diphosphate + ATP. The protein operates within amino-acid biosynthesis; L-histidine biosynthesis; L-histidine from 5-phospho-alpha-D-ribose 1-diphosphate: step 1/9. Feedback inhibited by histidine. Functionally, catalyzes the condensation of ATP and 5-phosphoribose 1-diphosphate to form N'-(5'-phosphoribosyl)-ATP (PR-ATP). Has a crucial role in the pathway because the rate of histidine biosynthesis seems to be controlled primarily by regulation of HisG enzymatic activity. This is ATP phosphoribosyltransferase from Vibrio vulnificus (strain CMCP6).